The sequence spans 231 residues: ATP phosphoribosyltransferase (231 aa).

This sequence belongs to the ATP phosphoribosyltransferase family. Short subfamily. In terms of assembly, heteromultimer composed of HisG and HisZ subunits.

It is found in the cytoplasm. It carries out the reaction 1-(5-phospho-beta-D-ribosyl)-ATP + diphosphate = 5-phospho-alpha-D-ribose 1-diphosphate + ATP. Its pathway is amino-acid biosynthesis; L-histidine biosynthesis; L-histidine from 5-phospho-alpha-D-ribose 1-diphosphate: step 1/9. Functionally, catalyzes the condensation of ATP and 5-phosphoribose 1-diphosphate to form N'-(5'-phosphoribosyl)-ATP (PR-ATP). Has a crucial role in the pathway because the rate of histidine biosynthesis seems to be controlled primarily by regulation of HisG enzymatic activity. The polypeptide is ATP phosphoribosyltransferase (Sinorhizobium medicae (strain WSM419) (Ensifer medicae)).